A 188-amino-acid chain; its full sequence is GTPase KRas (188 aa).

Residues 10–18 (GAGGVGKSA), 29–35 (VDEYDPT), 59–60 (AG), and 116–119 (NKCD) each bind GTP. Residues 32-40 (YDPTIEDSY) carry the Effector region motif. The segment at 167-188 (KEKMSKEGKKKKKKSKTKCVLM) is disordered. Position 185 is a cysteine methyl ester (C185). C185 carries the S-farnesyl cysteine lipid modification. The propeptide at 186–188 (VLM) is removed in mature form.

This sequence belongs to the small GTPase superfamily. Ras family.

It is found in the cell membrane. The protein resides in the cytoplasm. It carries out the reaction GTP + H2O = GDP + phosphate + H(+). Its activity is regulated as follows. Alternates between an inactive form bound to GDP and an active form bound to GTP. Activated by a guanine nucleotide-exchange factor (GEF) and inactivated by a GTPase-activating protein (GAP). Functionally, ras proteins bind GDP/GTP and possess intrinsic GTPase activity. Plays an important role in the regulation of cell proliferation. May play a role in promoting oncogenic events by inducing transcriptional silencing of tumor suppressor genes (TSGs). The protein is GTPase KRas (kras) of Cyprinus carpio (Common carp).